A 64-amino-acid chain; its full sequence is Alpha-conotoxin CnIA (64 aa).

An N-terminal signal peptide occupies residues 1–21 (MGMRMMFTVFLLVVLTTTVVS). The propeptide occupies 22–47 (FPSDSASDGRDDEAKDERSDIYESKR). 2 cysteine pairs are disulfide-bonded: Cys-51–Cys-56 and Cys-52–Cys-62. 4-hydroxyproline; in CnIK; partial is present on Pro-54. Cys-62 is subject to Cysteine amide.

Belongs to the conotoxin A superfamily. As to expression, expressed by the venom duct.

The protein localises to the secreted. Functionally, alpha-conotoxins act on postsynaptic membranes, they bind to the nicotinic acetylcholine receptors (nAChR) and thus inhibit them. CnIA and CnIB block muscular nAChR alpha-1/gamma and alpha-1/delta subunits. The protein is Alpha-conotoxin CnIA of Conus consors (Singed cone).